A 262-amino-acid polypeptide reads, in one-letter code: Small ribosomal subunit protein eS4 (262 aa).

One can recognise an S4 RNA-binding domain in the interval Leu42 to Asp104.

The protein belongs to the eukaryotic ribosomal protein eS4 family.

The sequence is that of Small ribosomal subunit protein eS4 (RpS4) from Lysiphlebus testaceipes (Greenbugs aphid parastoid).